The chain runs to 113 residues: UPF0342 protein SMU_782 (113 aa).

This sequence belongs to the UPF0342 family.

The protein is UPF0342 protein SMU_782 of Streptococcus mutans serotype c (strain ATCC 700610 / UA159).